The following is a 279-amino-acid chain: Large ribosomal subunit protein uL2 (279 aa).

Disordered stretches follow at residues 33–58 (LLAPLPKKGGRNAHGRITTRHQGGGH) and 223–279 (GVAM…RKRG). Basic residues-rich tracts occupy residues 40-58 (KGGRNAHGRITTRHQGGGH) and 269-279 (VRRRYATRKRG).

It belongs to the universal ribosomal protein uL2 family. In terms of assembly, part of the 50S ribosomal subunit. Forms a bridge to the 30S subunit in the 70S ribosome.

One of the primary rRNA binding proteins. Required for association of the 30S and 50S subunits to form the 70S ribosome, for tRNA binding and peptide bond formation. It has been suggested to have peptidyltransferase activity; this is somewhat controversial. Makes several contacts with the 16S rRNA in the 70S ribosome. This chain is Large ribosomal subunit protein uL2, found in Salinispora arenicola (strain CNS-205).